The primary structure comprises 49 residues: Small, acid-soluble spore protein K (49 aa).

The tract at residues 1–49 (MRNKSRGFPNMNNNKFEGEPRAKDDFASKRPDGSTNTHPQERMRASGKR) is disordered. Composition is skewed to basic and acidic residues over residues 16–32 (FEGE…KRPD) and 39–49 (PQERMRASGKR).

It belongs to the SspK family.

The protein localises to the spore core. This is Small, acid-soluble spore protein K from Bacillus licheniformis (strain ATCC 14580 / DSM 13 / JCM 2505 / CCUG 7422 / NBRC 12200 / NCIMB 9375 / NCTC 10341 / NRRL NRS-1264 / Gibson 46).